Here is a 289-residue protein sequence, read N- to C-terminus: 4-hydroxy-3-methylbut-2-enyl diphosphate reductase (289 aa).

Residue Cys-13 participates in [4Fe-4S] cluster binding. (2E)-4-hydroxy-3-methylbut-2-enyl diphosphate contacts are provided by His-42 and His-76. Residues His-42 and His-76 each contribute to the dimethylallyl diphosphate site. Isopentenyl diphosphate contacts are provided by His-42 and His-76. Residue Cys-98 coordinates [4Fe-4S] cluster. His-130 provides a ligand contact to (2E)-4-hydroxy-3-methylbut-2-enyl diphosphate. A dimethylallyl diphosphate-binding site is contributed by His-130. His-130 contributes to the isopentenyl diphosphate binding site. Glu-132 (proton donor) is an active-site residue. Residue Thr-168 participates in (2E)-4-hydroxy-3-methylbut-2-enyl diphosphate binding. Cys-199 is a binding site for [4Fe-4S] cluster. Positions 227, 228, 229, and 272 each coordinate (2E)-4-hydroxy-3-methylbut-2-enyl diphosphate. 4 residues coordinate dimethylallyl diphosphate: Ser-227, Ser-228, Asn-229, and Ser-272. The isopentenyl diphosphate site is built by Ser-227, Ser-228, Asn-229, and Ser-272.

The protein belongs to the IspH family. [4Fe-4S] cluster serves as cofactor.

It catalyses the reaction isopentenyl diphosphate + 2 oxidized [2Fe-2S]-[ferredoxin] + H2O = (2E)-4-hydroxy-3-methylbut-2-enyl diphosphate + 2 reduced [2Fe-2S]-[ferredoxin] + 2 H(+). It carries out the reaction dimethylallyl diphosphate + 2 oxidized [2Fe-2S]-[ferredoxin] + H2O = (2E)-4-hydroxy-3-methylbut-2-enyl diphosphate + 2 reduced [2Fe-2S]-[ferredoxin] + 2 H(+). It participates in isoprenoid biosynthesis; dimethylallyl diphosphate biosynthesis; dimethylallyl diphosphate from (2E)-4-hydroxy-3-methylbutenyl diphosphate: step 1/1. It functions in the pathway isoprenoid biosynthesis; isopentenyl diphosphate biosynthesis via DXP pathway; isopentenyl diphosphate from 1-deoxy-D-xylulose 5-phosphate: step 6/6. Functionally, catalyzes the conversion of 1-hydroxy-2-methyl-2-(E)-butenyl 4-diphosphate (HMBPP) into a mixture of isopentenyl diphosphate (IPP) and dimethylallyl diphosphate (DMAPP). Acts in the terminal step of the DOXP/MEP pathway for isoprenoid precursor biosynthesis. The protein is 4-hydroxy-3-methylbut-2-enyl diphosphate reductase of Porphyromonas gingivalis (strain ATCC BAA-308 / W83).